Here is a 202-residue protein sequence, read N- to C-terminus: Recombination protein RecR (202 aa).

The C4-type zinc finger occupies 61–76; it reads CARCNSFTEDDICATC. Residues 84–179 form the Toprim domain; the sequence is SVLCVVETPA…KVTRLARGVP (96 aa).

The protein belongs to the RecR family.

In terms of biological role, may play a role in DNA repair. It seems to be involved in an RecBC-independent recombinational process of DNA repair. It may act with RecF and RecO. This chain is Recombination protein RecR, found in Bordetella petrii (strain ATCC BAA-461 / DSM 12804 / CCUG 43448).